The chain runs to 421 residues: F-box protein At2g17690 (421 aa).

The F-box domain occupies 2–50; that stretch reads GDWSKLPEELLGLIALRLYSVIELIRFRSICKSWRSSASGVNKNHSLSS.

Functionally, involved in heat stress response. Contributes to recovery from heat stress. This Arabidopsis thaliana (Mouse-ear cress) protein is F-box protein At2g17690.